Here is a 55-residue protein sequence, read N- to C-terminus: Large ribosomal subunit protein bL33 (55 aa).

This sequence belongs to the bacterial ribosomal protein bL33 family.

The chain is Large ribosomal subunit protein bL33 from Methylobacterium radiotolerans (strain ATCC 27329 / DSM 1819 / JCM 2831 / NBRC 15690 / NCIMB 10815 / 0-1).